The primary structure comprises 352 residues: tRNA-specific 2-thiouridylase MnmA (352 aa).

ATP-binding positions include 9 to 16 (ALSGGVDS) and methionine 35. Catalysis depends on cysteine 96, which acts as the Nucleophile. Cysteine 96 and cysteine 192 are disulfide-bonded. Glycine 120 provides a ligand contact to ATP. The segment at 142-144 (KDQ) is interaction with tRNA. The active-site Cysteine persulfide intermediate is the cysteine 192. The segment at 299–300 (RY) is interaction with tRNA.

This sequence belongs to the MnmA/TRMU family.

It localises to the cytoplasm. It carries out the reaction S-sulfanyl-L-cysteinyl-[protein] + uridine(34) in tRNA + AH2 + ATP = 2-thiouridine(34) in tRNA + L-cysteinyl-[protein] + A + AMP + diphosphate + H(+). Its function is as follows. Catalyzes the 2-thiolation of uridine at the wobble position (U34) of tRNA, leading to the formation of s(2)U34. This Acidithiobacillus ferrooxidans (strain ATCC 23270 / DSM 14882 / CIP 104768 / NCIMB 8455) (Ferrobacillus ferrooxidans (strain ATCC 23270)) protein is tRNA-specific 2-thiouridylase MnmA.